The following is a 168-amino-acid chain: Photosystem I assembly protein Ycf3 (168 aa).

3 TPR repeats span residues 35 to 68 (AFTY…EIDP), 72 to 105 (SYIL…NPFL), and 120 to 153 (GEQA…TPGN).

The protein belongs to the Ycf3 family.

Its subcellular location is the plastid. The protein resides in the chloroplast thylakoid membrane. In terms of biological role, essential for the assembly of the photosystem I (PSI) complex. May act as a chaperone-like factor to guide the assembly of the PSI subunits. The polypeptide is Photosystem I assembly protein Ycf3 (Ranunculus macranthus (Large buttercup)).